The sequence spans 462 residues: MTATFKKEVNLVFECETGNYHTFCPISCVAWLYQKIEDSFFLVIGTKTCGYFLQNALGVMIFAEPRYAMAELEEGDISAQLNDYKELKRLCLQIKQDRNPSVIVWIGTCTTEIIKMDLEGMAPRLESEIDIPIVVARANGLDYAFTQGEDTVLAAMVNRCPKKDQLTKPLQAVSFIDTDSLQKEKGPKYDSINHDKDLVLFGSLPSTVVTQLNLELQRQDIKVSGWLPSQRYSDLPILDSGVYVCGVNPFLSRTAATLMRRRKCKLIGAPFPIGPDGTRAWVEKICSVFGKQPQGLEQREAEIWKGLEDYLQLVRGKSVFFMGDNLLEVSLARFLIRCGMIVYEIGIPYMDKRFQAAELAFLEKTCHDMNVPMPRIVEKPDNYNQIQRIKELQPDLAITGMAHANPLEARGISTKWSVEFTFAQIHGFTNSRDILELVTRPLRRNNSLEGSLGWTQLVKSTV.

The [4Fe-4S] cluster site is built by Cys24, Cys49, and Cys109.

The protein belongs to the BchN/ChlN family. In terms of assembly, protochlorophyllide reductase is composed of three subunits; ChlL, ChlN and ChlB. Forms a heterotetramer of two ChlB and two ChlN subunits. The cofactor is [4Fe-4S] cluster.

Its subcellular location is the plastid. The protein localises to the chloroplast. It carries out the reaction chlorophyllide a + oxidized 2[4Fe-4S]-[ferredoxin] + 2 ADP + 2 phosphate = protochlorophyllide a + reduced 2[4Fe-4S]-[ferredoxin] + 2 ATP + 2 H2O. It functions in the pathway porphyrin-containing compound metabolism; chlorophyll biosynthesis (light-independent). Functionally, component of the dark-operative protochlorophyllide reductase (DPOR) that uses Mg-ATP and reduced ferredoxin to reduce ring D of protochlorophyllide (Pchlide) to form chlorophyllide a (Chlide). This reaction is light-independent. The NB-protein (ChlN-ChlB) is the catalytic component of the complex. The protein is Light-independent protochlorophyllide reductase subunit N of Pleurastrum terricola (Filamentous green alga).